Here is a 459-residue protein sequence, read N- to C-terminus: uncharacterized protein (459 aa).

One can recognise a TRAM domain in the interval K6–R64. Positions 289, 318, 339, and 387 each coordinate S-adenosyl-L-methionine. C414 serves as the catalytic Nucleophile.

It belongs to the class I-like SAM-binding methyltransferase superfamily. RNA M5U methyltransferase family.

This is an uncharacterized protein from Lactobacillus johnsonii (strain CNCM I-12250 / La1 / NCC 533).